Consider the following 169-residue polypeptide: Disulfide bond formation protein B 1 (169 aa).

The Cytoplasmic segment spans residues M1–F14. The helical transmembrane segment at L15–Y31 threads the bilayer. The Periplasmic portion of the chain corresponds to M32–Y49. C41 and C44 are joined by a disulfide. The chain crosses the membrane as a helical span at residues A50–M64. At S65–T71 the chain is on the cytoplasmic side. A helical membrane pass occupies residues V72–G89. Residues R90 to Q144 lie on the Periplasmic side of the membrane. A disulfide bridge links C102 with C130. Residues W145 to R163 form a helical membrane-spanning segment. Residues N164 to Y169 lie on the Cytoplasmic side of the membrane.

The protein belongs to the DsbB family.

The protein resides in the cell inner membrane. In terms of biological role, required for disulfide bond formation in some periplasmic proteins. Acts by oxidizing the DsbA protein. This chain is Disulfide bond formation protein B 1, found in Pseudomonas savastanoi pv. phaseolicola (strain 1448A / Race 6) (Pseudomonas syringae pv. phaseolicola (strain 1448A / Race 6)).